Reading from the N-terminus, the 57-residue chain is Small ribosomal subunit protein bS21 (57 aa).

Belongs to the bacterial ribosomal protein bS21 family.

This chain is Small ribosomal subunit protein bS21, found in Bacillus cytotoxicus (strain DSM 22905 / CIP 110041 / 391-98 / NVH 391-98).